The sequence spans 199 residues: Transgelin-3 (199 aa).

The 113-residue stretch at 24–136 folds into the Calponin-homology (CH) domain; sequence ADLENKLVDW…RTLMALGSVA (113 aa). The residue at position 163 (Ser163) is a Phosphoserine. The Calponin-like repeat unit spans residues 174-199; the sequence is IGLQMGSNKGASQAGMTGYGMPRQIM. Polar residues predominate over residues 176–188; sequence LQMGSNKGASQAG. The interval 176-199 is disordered; it reads LQMGSNKGASQAGMTGYGMPRQIM.

Belongs to the calponin family.

This Pongo abelii (Sumatran orangutan) protein is Transgelin-3 (TAGLN3).